A 167-amino-acid chain; its full sequence is Urease accessory protein UreE (167 aa).

It belongs to the UreE family.

It is found in the cytoplasm. Functionally, involved in urease metallocenter assembly. Binds nickel. Probably functions as a nickel donor during metallocenter assembly. This is Urease accessory protein UreE from Pseudomonas paraeruginosa (strain DSM 24068 / PA7) (Pseudomonas aeruginosa (strain PA7)).